Here is a 294-residue protein sequence, read N- to C-terminus: Cytidine deaminase (294 aa).

CMP/dCMP-type deaminase domains are found at residues 48-168 (DEDA…FGPK) and 186-294 (LTGD…VLLG). 89–91 (NME) contributes to the substrate binding site. His102 is a Zn(2+) binding site. The active-site Proton donor is Glu104. Zn(2+) is bound by residues Cys129 and Cys132.

Belongs to the cytidine and deoxycytidylate deaminase family. Homodimer. It depends on Zn(2+) as a cofactor.

The enzyme catalyses cytidine + H2O + H(+) = uridine + NH4(+). It carries out the reaction 2'-deoxycytidine + H2O + H(+) = 2'-deoxyuridine + NH4(+). Functionally, this enzyme scavenges exogenous and endogenous cytidine and 2'-deoxycytidine for UMP synthesis. The sequence is that of Cytidine deaminase from Salmonella enteritidis PT4 (strain P125109).